The chain runs to 787 residues: ABC transporter G family member 5 (787 aa).

Basic and acidic residues predominate over residues 1–17; that stretch reads MSRFVDKLPLFDRRPSP. Disordered stretches follow at residues 1–25 and 71–116; these read MSRFVDKLPLFDRRPSPMEEAEGLP and NDAR…EGQP. A compositionally biased stretch (polar residues) spans 74–85; the sequence is RSGSSTPISSPR. The 262-residue stretch at 121-382 folds into the ABC transporter domain; it reads LKFTDLTYSV…FLDFGKPIPD (262 aa). ATP is bound at residue 175–182; the sequence is GASGSGKS. One can recognise an ABC transmembrane type-2 domain in the interval 484 to 691; it reads GVLTRRAFIN…PYEAVMQNEF (208 aa). Helical transmembrane passes span 500–520, 535–555, 576–596, 599–619, 620–640, 641–661, 728–745, and 760–780; these read VFIIRLAAVLVTGFILATIFW, FFAIAMSTMYYTCSDALPVFL, VLSHTIVGFPSLVVLSFAFAL, FFSVGLAGGVNGFFYFVAIVL, ASFWAGSGFATFLSGVVTHVM, LGFPVVLSTLAYFLLFSGFFI, SLGVNIGTGTCITTGPDF, and LWITVAWGFLFRILFYISLLL.

The protein belongs to the ABC transporter superfamily. ABCG family. Eye pigment precursor importer (TC 3.A.1.204) subfamily. As to expression, expressed in the crown root primordia, endodermis, pericycle and stele in the root, in leaf primordia of main and axillary shoots, and in the vascular cells and leaf epidermis of older leaves.

The protein localises to the cell membrane. Essential transporter for growth and development under abiotic stress. Mediates shoot branching by promoting the outgrowth of lateral shoots. Required for salt tolerance via Na/K homeostasis, at least partly by regulating SKC1/OsHKT1;5. Necessary for hypodermal suberization of roots, which contributes to formation of the apoplastic barrier. The protein is ABC transporter G family member 5 of Oryza sativa subsp. japonica (Rice).